The primary structure comprises 519 residues: 2,3-bisphosphoglycerate-independent phosphoglycerate mutase (519 aa).

Residues aspartate 9 and serine 60 each contribute to the Mn(2+) site. The Phosphoserine intermediate role is filled by serine 60. The segment covering 76-91 (DSARVSDSIARSRGEA) has biased composition (basic and acidic residues). The tract at residues 76–102 (DSARVSDSIARSRGEAPPDDDAQDPPF) is disordered. Residues histidine 134, 163-164 (RD), arginine 195, arginine 201, 267-270 (RSDR), and lysine 341 contribute to the substrate site. Residues aspartate 408, histidine 412, aspartate 449, histidine 450, and histidine 466 each coordinate Mn(2+).

The protein belongs to the BPG-independent phosphoglycerate mutase family. Mn(2+) is required as a cofactor.

It carries out the reaction (2R)-2-phosphoglycerate = (2R)-3-phosphoglycerate. Its pathway is carbohydrate degradation; glycolysis; pyruvate from D-glyceraldehyde 3-phosphate: step 3/5. Its function is as follows. Catalyzes the interconversion of 2-phosphoglycerate and 3-phosphoglycerate. The polypeptide is 2,3-bisphosphoglycerate-independent phosphoglycerate mutase (Haloarcula marismortui (strain ATCC 43049 / DSM 3752 / JCM 8966 / VKM B-1809) (Halobacterium marismortui)).